The primary structure comprises 1107 residues: Unconventional myosin-Ib (1107 aa).

The 687-residue stretch at 15–701 folds into the Myosin motor domain; it reads IGVGDMVLLE…TLFQLEDLRK (687 aa). Ser60 carries the phosphoserine modification. An ATP-binding site is contributed by 108 to 115; the sequence is GESGAGKT. Residue Lys287 forms a Glycyl lysine isopeptide (Lys-Gly) (interchain with G-Cter in SUMO1); alternate linkage. Lys287 participates in a covalent cross-link: Glycyl lysine isopeptide (Lys-Gly) (interchain with G-Cter in SUMO2); alternate. The actin-binding stretch occupies residues 592-599; that stretch reads YIRCIKPN. IQ domains follow at residues 704–727, 728–749, 750–778, 780–807, and 808–837; these read LEDLATLIQKIYRGWKCRTHFLLM, KRSQVVIAAWYRRYAQQKRYQQ, IKSSALVIQSYIRGWKARKILRELKHQKR, KEAATTIAAYWHGTQARRELKRLKEEAR, and RKHAVAVIWAYWLGLKVRREYRKFFRANAG. In terms of domain architecture, TH1 spans 923 to 1107; sequence KALYPSSVGQ…NNRLLEVAVP (185 aa).

Belongs to the TRAFAC class myosin-kinesin ATPase superfamily. Myosin family. As to expression, prominent expression is seen in the brain, lung and liver. It is also expressed in the heart and testis. A high level expression is seen in virtually all neurons (but not glia) in the postnatal and adult mouse brain and in neuroblasts of the cerebellar external granular layer.

In terms of biological role, motor protein that may participate in process critical to neuronal development and function such as cell migration, neurite outgrowth and vesicular transport. The sequence is that of Unconventional myosin-Ib (Myo1b) from Mus musculus (Mouse).